A 155-amino-acid polypeptide reads, in one-letter code: Molybdopterin synthase catalytic subunit (155 aa).

Substrate-binding positions include 109-110, Lys125, and 132-134; these read HR and KKE.

It belongs to the MoaE family. MOCS2B subfamily. As to quaternary structure, heterotetramer; composed of 2 small (MOCS2A) and 2 large (MOCS2B) subunits.

Its subcellular location is the cytoplasm. The protein resides in the cytosol. It carries out the reaction 2 [molybdopterin-synthase sulfur-carrier protein]-C-terminal-Gly-aminoethanethioate + cyclic pyranopterin phosphate + H2O = molybdopterin + 2 [molybdopterin-synthase sulfur-carrier protein]-C-terminal Gly-Gly + 2 H(+). It participates in cofactor biosynthesis; molybdopterin biosynthesis. Catalytic subunit of the molybdopterin synthase complex, a complex that catalyzes the conversion of precursor Z into molybdopterin. Acts by mediating the incorporation of 2 sulfur atoms from thiocarboxylated MOCS2A into precursor Z to generate a dithiolene group. This chain is Molybdopterin synthase catalytic subunit, found in Taeniopygia guttata (Zebra finch).